A 405-amino-acid chain; its full sequence is Arginine biosynthesis bifunctional protein ArgJ (405 aa).

6 residues coordinate substrate: Thr152, Lys178, Thr189, Glu276, Asn400, and Thr405. Catalysis depends on Thr189, which acts as the Nucleophile.

It belongs to the ArgJ family. As to quaternary structure, heterotetramer of two alpha and two beta chains.

It localises to the cytoplasm. The enzyme catalyses N(2)-acetyl-L-ornithine + L-glutamate = N-acetyl-L-glutamate + L-ornithine. The catalysed reaction is L-glutamate + acetyl-CoA = N-acetyl-L-glutamate + CoA + H(+). The protein operates within amino-acid biosynthesis; L-arginine biosynthesis; L-ornithine and N-acetyl-L-glutamate from L-glutamate and N(2)-acetyl-L-ornithine (cyclic): step 1/1. Its pathway is amino-acid biosynthesis; L-arginine biosynthesis; N(2)-acetyl-L-ornithine from L-glutamate: step 1/4. In terms of biological role, catalyzes two activities which are involved in the cyclic version of arginine biosynthesis: the synthesis of N-acetylglutamate from glutamate and acetyl-CoA as the acetyl donor, and of ornithine by transacetylation between N(2)-acetylornithine and glutamate. The chain is Arginine biosynthesis bifunctional protein ArgJ from Pseudomonas fluorescens (strain ATCC BAA-477 / NRRL B-23932 / Pf-5).